The sequence spans 68 residues: Conotoxin ArMMSK-01 (68 aa).

An N-terminal signal peptide occupies residues 1–20 (MMSKLGVLLTICMLLFPLTA). A propeptide spanning residues 21-51 (LPLDGDQPADRPAERMQDDFISEQHPLFNPI) is cleaved from the precursor. Disulfide bonds link Cys54–Cys67, Cys55–Cys63, and Cys59–Cys66. Pro65 is subject to 4-hydroxyproline.

The protein belongs to the conotoxin M superfamily. As to expression, expressed by the venom duct.

The protein localises to the secreted. This Conus arenatus (Sand-dusted cone) protein is Conotoxin ArMMSK-01.